Consider the following 103-residue polypeptide: Large ribosomal subunit protein bL21 (103 aa).

It belongs to the bacterial ribosomal protein bL21 family. In terms of assembly, part of the 50S ribosomal subunit. Contacts protein L20.

Functionally, this protein binds to 23S rRNA in the presence of protein L20. This chain is Large ribosomal subunit protein bL21, found in Kocuria rhizophila (strain ATCC 9341 / DSM 348 / NBRC 103217 / DC2201).